The following is a 43-amino-acid chain: uncharacterized protein (43 aa).

Belongs to the ELIP/psbS family.

Its subcellular location is the plastid. It localises to the chloroplast. Functionally, possible role in chlorophyll and/or carotenoid binding. This is an uncharacterized protein from Cyanidium caldarium (Red alga).